The sequence spans 96 residues: Bublin coiled-coil protein (96 aa).

A coiled-coil region spans residues 39–79 (NSCLDDIEDRNDALNGKLHELLESNRQARKDFRQQLNDEEA). Residues 63–96 (NRQARKDFRQQLNDEEASPPPAEDPASRDTQTED) are disordered. The segment covering 87–96 (PASRDTQTED) has biased composition (basic and acidic residues).

The protein belongs to the UPF0184 (EST00098) family.

It localises to the cell junction. The protein localises to the cytoplasm. The protein resides in the cytoskeleton. Its function is as follows. Essential for intermediate filament organization in intestinal cells, interacts with intermediate filament and regulates intestinal lumen morphology. This Ctenopharyngodon idella (Grass carp) protein is Bublin coiled-coil protein (bbln).